Here is a 334-residue protein sequence, read N- to C-terminus: ADP-L-glycero-D-manno-heptose-6-epimerase (334 aa).

Residues 11–12 (FI), 32–33 (DN), K39, K54, 77–81 (QGACS), and N94 each bind NADP(+). Y141 serves as the catalytic Proton acceptor. Position 145 (K145) interacts with NADP(+). Position 171 (N171) interacts with substrate. The NADP(+) site is built by V172 and K180. K180 functions as the Proton acceptor in the catalytic mechanism. Substrate is bound by residues R182, H189, 203-206 (FGSN), R216, and Y295.

The protein belongs to the NAD(P)-dependent epimerase/dehydratase family. HldD subfamily. In terms of assembly, homopentamer. It depends on NADP(+) as a cofactor.

It carries out the reaction ADP-D-glycero-beta-D-manno-heptose = ADP-L-glycero-beta-D-manno-heptose. Its pathway is nucleotide-sugar biosynthesis; ADP-L-glycero-beta-D-manno-heptose biosynthesis; ADP-L-glycero-beta-D-manno-heptose from D-glycero-beta-D-manno-heptose 7-phosphate: step 4/4. Catalyzes the interconversion between ADP-D-glycero-beta-D-manno-heptose and ADP-L-glycero-beta-D-manno-heptose via an epimerization at carbon 6 of the heptose. The chain is ADP-L-glycero-D-manno-heptose-6-epimerase from Neisseria meningitidis serogroup C (strain 053442).